Here is a 59-residue protein sequence, read N- to C-terminus: Large ribosomal subunit protein bL32 (59 aa).

The disordered stretch occupies residues 1–20 (MAVQKNKPTRSKRGMRRSHD). Positions 7–19 (KPTRSKRGMRRSH) are enriched in basic residues.

Belongs to the bacterial ribosomal protein bL32 family.

The protein is Large ribosomal subunit protein bL32 of Wigglesworthia glossinidia brevipalpis.